The primary structure comprises 525 residues: Vanin-like protein 2 (525 aa).

Residues 1 to 27 (MAKNYWGFFLFCLALGLMLNLSQQASL) form the signal peptide. Residues N20 and N61 are each glycosylated (N-linked (GlcNAc...) asparagine). Positions 33–303 (YTAGVVEFEP…RSIYVARVPK (271 aa)) constitute a CN hydrolase domain. E72 functions as the Proton acceptor in the catalytic mechanism. Residues N99, N116, and N124 are each glycosylated (N-linked (GlcNAc...) asparagine). The active-site Proton donor is K167. The N-linked (GlcNAc...) asparagine glycan is linked to N176. The Nucleophile role is filled by C199. Residues N333, N348, and N375 are each glycosylated (N-linked (GlcNAc...) asparagine).

The protein belongs to the carbon-nitrogen hydrolase superfamily. BTD/VNN family. In terms of tissue distribution, expressed in third instar larvae.

It is found in the secreted. The chain is Vanin-like protein 2 from Drosophila melanogaster (Fruit fly).